A 60-amino-acid chain; its full sequence is Large ribosomal subunit protein bL33 (60 aa).

Belongs to the bacterial ribosomal protein bL33 family.

The polypeptide is Large ribosomal subunit protein bL33 (Chlorobium phaeovibrioides (strain DSM 265 / 1930) (Prosthecochloris vibrioformis (strain DSM 265))).